Here is a 365-residue protein sequence, read N- to C-terminus: tRNA-specific 2-thiouridylase MnmA (365 aa).

Residues 14–21 (AMSGGVDS) and leucine 40 each bind ATP. Cysteine 108 serves as the catalytic Nucleophile. Cysteine 108 and cysteine 204 are oxidised to a cystine. An ATP-binding site is contributed by glycine 132. The segment at 154 to 156 (KDQ) is interaction with tRNA. Cysteine 204 serves as the catalytic Cysteine persulfide intermediate.

Belongs to the MnmA/TRMU family.

The protein resides in the cytoplasm. It carries out the reaction S-sulfanyl-L-cysteinyl-[protein] + uridine(34) in tRNA + AH2 + ATP = 2-thiouridine(34) in tRNA + L-cysteinyl-[protein] + A + AMP + diphosphate + H(+). Catalyzes the 2-thiolation of uridine at the wobble position (U34) of tRNA, leading to the formation of s(2)U34. This chain is tRNA-specific 2-thiouridylase MnmA, found in Rickettsia akari (strain Hartford).